Here is a 608-residue protein sequence, read N- to C-terminus: Leucine aminopeptidase 2 (608 aa).

Residues 134–136 (QCQ) and 269–274 (PYGGME) each bind substrate. His-298 is a Zn(2+) binding site. The active-site Proton acceptor is the Glu-299. Zn(2+)-binding residues include His-302 and Glu-321. Tyr-386 serves as the catalytic Proton donor.

Belongs to the peptidase M1 family. Requires Zn(2+) as cofactor.

It is found in the cytoplasm. The protein localises to the nucleus. The catalysed reaction is an epoxide + H2O = an ethanediol. Aminopeptidase that preferentially cleaves di- and tripeptides. Also has low epoxide hydrolase activity (in vitro). Can hydrolyze the epoxide leukotriene LTA(4) but it forms preferentially 5,6-dihydroxy-7,9,11,14-eicosatetraenoic acid rather than the cytokine leukotriene B(4) as the product compared to the homologous mammalian enzyme (in vitro). The sequence is that of Leucine aminopeptidase 2 from Sclerotinia sclerotiorum (strain ATCC 18683 / 1980 / Ss-1) (White mold).